The primary structure comprises 457 residues: Cyclic dof factor 2 (457 aa).

The interval methionine 1 to lysine 130 is disordered. The span at aspartate 22–glutamine 35 shows a compositional bias: polar residues. Composition is skewed to acidic residues over residues threonine 45–glycine 54 and glutamate 62–serine 73. 2 stretches are compositionally biased toward basic and acidic residues: residues glutamate 74–serine 94 and glutamate 106–glutamate 118. The Dof-type zinc finger occupies leucine 138–serine 192. Positions 140, 143, 165, and 168 each coordinate Zn(2+). Disordered regions lie at residues glutamine 334–proline 377 and alanine 417–serine 457. The segment covering serine 337–proline 346 has biased composition (low complexity).

As to quaternary structure, interacts with ADO2 (via kelch repeats) and ADO3 (via kelch repeats). Expressed in the vasculature of cotyledons and hypocotyls, leaves and roots.

The protein resides in the nucleus. In terms of biological role, transcription factor that binds specifically to a 5'-AA[AG]G-3' consensus core sequence. Regulates a photoperiodic flowering response. Transcriptional repressor of 'CONSTANS' expression. The stability of CDF2 is controlled by 'GIGANTEA' and redundantly by ADO3, ADO2 and/or ADO1. This Arabidopsis thaliana (Mouse-ear cress) protein is Cyclic dof factor 2 (CDF2).